The following is a 41-amino-acid chain: Large ribosomal subunit protein bL36 (41 aa).

This sequence belongs to the bacterial ribosomal protein bL36 family.

The sequence is that of Large ribosomal subunit protein bL36 from Stenotrophomonas maltophilia (strain R551-3).